We begin with the raw amino-acid sequence, 166 residues long: Nascent polypeptide-associated complex subunit beta (166 aa).

2 disordered regions span residues 1–40 (MVLN…EDPK) and 129–166 (HAAS…DKLD). Residues 35 to 100 (GGEDPKLQAA…GVDKELTELV (66 aa)) form the NAC-A/B domain. Acidic residues predominate over residues 141 to 153 (DDDDVPDVVENFD). A compositionally biased stretch (basic and acidic residues) spans 154-166 (EADKKETEVDKLD).

The protein belongs to the NAC-beta family. Part of the nascent polypeptide-associated complex (NAC), consisting of EGD2 and EGD1. NAC associates with ribosomes via EGD1.

The protein localises to the cytoplasm. It is found in the nucleus. Functionally, component of the nascent polypeptide-associated complex (NAC), a dynamic component of the ribosomal exit tunnel, protecting the emerging polypeptides from interaction with other cytoplasmic proteins to ensure appropriate nascent protein targeting. The NAC complex also promotes mitochondrial protein import by enhancing productive ribosome interactions with the outer mitochondrial membrane and blocks the inappropriate interaction of ribosomes translating non-secretory nascent polypeptides with translocation sites in the membrane of the endoplasmic reticulum. EGD1 may act as a transcription factor that exert a negative effect on the expression of several genes that are transcribed by RNA polymerase II. The chain is Nascent polypeptide-associated complex subunit beta (EGD1) from Mycosarcoma maydis (Corn smut fungus).